A 520-amino-acid chain; its full sequence is Developmental regulatory protein wetA (520 aa).

5 disordered regions span residues 49 to 72 (GDLP…NEWS), 104 to 165 (VPSR…MRSS), 236 to 295 (QSPS…WQSD), 367 to 453 (DHSF…GSNK), and 471 to 496 (LTGV…RRRK). 3 stretches are compositionally biased toward polar residues: residues 63 to 72 (SPQPWSNEWS), 104 to 114 (VPSRPTASHGL), and 155 to 165 (QSFSPSLMRSS). Positions 237–251 (SPSVSMPSPSIAMSA) are enriched in low complexity. The span at 252-261 (RQQQHYIAQP) shows a compositional bias: polar residues. The segment covering 262–295 (SSSSLTNSSPSSADDIFSSSHSSDPHSLSSWQSD) has biased composition (low complexity). The segment covering 367-401 (DHSFSSSNMLPATPQKFDTSFNTSQVHNVSRSPSL) has biased composition (polar residues). Residues 420–429 (PTHRRTHSRK) are compositionally biased toward basic residues. Over residues 436 to 453 (NAPKPAKASGSSSRGSNK) the composition is skewed to low complexity.

Belongs to the wetA family.

BrlA, abaA and wetA are pivotal regulators of conidiophore development and conidium maturation. They act individually and together to regulate their own expression and that of numerous other sporulation-specific genes. Responsible for activating a set of genes whose products make up the final two conidial wall layers or direct their assembly and though this activity is responsible for acquisition of spore dormancy. The polypeptide is Developmental regulatory protein wetA (Penicillium rubens (strain ATCC 28089 / DSM 1075 / NRRL 1951 / Wisconsin 54-1255) (Penicillium chrysogenum)).